Here is a 397-residue protein sequence, read N- to C-terminus: Polyphosphatase (397 aa).

Residues D41, D127, and H148 each contribute to the Mg(2+) site. Mn(2+) contacts are provided by D41, D127, and H148. 3 residues coordinate ATP: H149, S286, and R381.

It belongs to the PPase class C family. The cofactor is Mn(2+). Mg(2+) is required as a cofactor.

The enzyme catalyses [phosphate](n) + H2O = [phosphate](n-1) + phosphate + H(+). Functionally, polyphosphatase (polyPase) involved in the degradation of inorganic polyphosphates (polyP) that is able to degrade a range of chains from three to several hundreds of residues in a highly processive manner. Exclusively shows exopolyphosphatase activity, cleaving inside the polyP chain. The sequence is that of Polyphosphatase from Saccharomyces cerevisiae (strain ATCC 204508 / S288c) (Baker's yeast).